Reading from the N-terminus, the 423-residue chain is Enolase (423 aa).

Position 163 (Q163) interacts with (2R)-2-phosphoglycerate. E205 acts as the Proton donor in catalysis. Mg(2+) contacts are provided by D242, E285, and D312. (2R)-2-phosphoglycerate contacts are provided by K337, R366, S367, and K388. K337 (proton acceptor) is an active-site residue.

It belongs to the enolase family. Mg(2+) is required as a cofactor.

The protein resides in the cytoplasm. The protein localises to the secreted. It localises to the cell surface. It catalyses the reaction (2R)-2-phosphoglycerate = phosphoenolpyruvate + H2O. The protein operates within carbohydrate degradation; glycolysis; pyruvate from D-glyceraldehyde 3-phosphate: step 4/5. Its function is as follows. Catalyzes the reversible conversion of 2-phosphoglycerate (2-PG) into phosphoenolpyruvate (PEP). It is essential for the degradation of carbohydrates via glycolysis. The polypeptide is Enolase (Desulforapulum autotrophicum (strain ATCC 43914 / DSM 3382 / VKM B-1955 / HRM2) (Desulfobacterium autotrophicum)).